Reading from the N-terminus, the 117-residue chain is Immunoglobulin heavy variable 4-28 (117 aa).

Positions 1-19 are cleaved as a signal peptide; that stretch reads MKHLWFFLLLVAAPRWVLS. Residues 20–44 are framework-1; the sequence is QVQLQESGPGLVKPSDTLSLTCAVS. Residues 20-117 enclose the Ig-like domain; the sequence is QVQLQESGPG…VDTAVYYCAR (98 aa). A disulfide bridge connects residues Cys41 and Cys115. The segment at 45 to 53 is complementarity-determining-1; the sequence is GYSISSSNW. Positions 54–70 are framework-2; the sequence is WGWIRQPPGKGLEWIGY. The complementarity-determining-2 stretch occupies residues 71 to 77; the sequence is IYYSGST. A framework-3 region spans residues 78–115; the sequence is YYNPSLKSRVTMSVDTSKNQFSLKLSSVTAVDTAVYYC. The complementarity-determining-3 stretch occupies residues 116–117; that stretch reads AR.

Immunoglobulins are composed of two identical heavy chains and two identical light chains; disulfide-linked.

It localises to the secreted. It is found in the cell membrane. V region of the variable domain of immunoglobulin heavy chains that participates in the antigen recognition. Immunoglobulins, also known as antibodies, are membrane-bound or secreted glycoproteins produced by B lymphocytes. In the recognition phase of humoral immunity, the membrane-bound immunoglobulins serve as receptors which, upon binding of a specific antigen, trigger the clonal expansion and differentiation of B lymphocytes into immunoglobulins-secreting plasma cells. Secreted immunoglobulins mediate the effector phase of humoral immunity, which results in the elimination of bound antigens. The antigen binding site is formed by the variable domain of one heavy chain, together with that of its associated light chain. Thus, each immunoglobulin has two antigen binding sites with remarkable affinity for a particular antigen. The variable domains are assembled by a process called V-(D)-J rearrangement and can then be subjected to somatic hypermutations which, after exposure to antigen and selection, allow affinity maturation for a particular antigen. The chain is Immunoglobulin heavy variable 4-28 from Homo sapiens (Human).